The following is a 1801-amino-acid chain: U3 small nucleolar RNA-associated protein 10 (1801 aa).

Residues 582–619 (IDFQALVPFVLVALGDVSERIRREAAAVLAALGALYKK) form an HEAT 1 repeat. A run of 2 helical transmembrane segments spans residues 945–965 (IQSG…AIVN) and 1001–1021 (ALLL…HSVM). 4 HEAT repeats span residues 1045–1082 (QTID…AFEH), 1252–1289 (LSLI…QNPE), 1296–1334 (NRML…KYGK), and 1757–1794 (ALLP…VLGE).

This sequence belongs to the HEATR1/UTP10 family. As to quaternary structure, component of the ribosomal small subunit (SSU) processome.

The protein localises to the nucleus. Its subcellular location is the nucleolus. The protein resides in the membrane. Involved in nucleolar processing of pre-18S ribosomal RNA. Involved in ribosome biosynthesis. This chain is U3 small nucleolar RNA-associated protein 10, found in Aspergillus terreus (strain NIH 2624 / FGSC A1156).